A 92-amino-acid chain; its full sequence is YcgL domain-containing protein Sama_1929 (92 aa).

The YcgL domain maps to 1-85 (MICAVYKSSR…PKDNLLTQHR (85 aa)).

The sequence is that of YcgL domain-containing protein Sama_1929 from Shewanella amazonensis (strain ATCC BAA-1098 / SB2B).